The sequence spans 478 residues: 3-isopropylmalate dehydratase large subunit (478 aa).

The [4Fe-4S] cluster site is built by Cys-357, Cys-418, and Cys-421.

The protein belongs to the aconitase/IPM isomerase family. LeuC type 1 subfamily. Heterodimer of LeuC and LeuD. Requires [4Fe-4S] cluster as cofactor.

The catalysed reaction is (2R,3S)-3-isopropylmalate = (2S)-2-isopropylmalate. It participates in amino-acid biosynthesis; L-leucine biosynthesis; L-leucine from 3-methyl-2-oxobutanoate: step 2/4. Its function is as follows. Catalyzes the isomerization between 2-isopropylmalate and 3-isopropylmalate, via the formation of 2-isopropylmaleate. This Novosphingobium aromaticivorans (strain ATCC 700278 / DSM 12444 / CCUG 56034 / CIP 105152 / NBRC 16084 / F199) protein is 3-isopropylmalate dehydratase large subunit.